Reading from the N-terminus, the 265-residue chain is Cytochrome c oxidase subunit 3 (265 aa).

Helical transmembrane passes span 16–36 (PWPF…ILWL), 40–60 (PSFL…FSWW), 83–103 (CVAL…WTFF), 159–179 (VGPF…FLVQ), 198–218 (VFYL…IWLM), and 241–261 (IWYW…VYVW).

The protein belongs to the cytochrome c oxidase subunit 3 family. As to quaternary structure, component of the cytochrome c oxidase (complex IV, CIV), a multisubunit enzyme composed of a catalytic core of 3 subunits and several supernumerary subunits. The complex exists as a monomer or a dimer and forms supercomplexes (SCs) in the inner mitochondrial membrane with ubiquinol-cytochrome c oxidoreductase (cytochrome b-c1 complex, complex III, CIII).

It is found in the mitochondrion inner membrane. It catalyses the reaction 4 Fe(II)-[cytochrome c] + O2 + 8 H(+)(in) = 4 Fe(III)-[cytochrome c] + 2 H2O + 4 H(+)(out). Component of the cytochrome c oxidase, the last enzyme in the mitochondrial electron transport chain which drives oxidative phosphorylation. The respiratory chain contains 3 multisubunit complexes succinate dehydrogenase (complex II, CII), ubiquinol-cytochrome c oxidoreductase (cytochrome b-c1 complex, complex III, CIII) and cytochrome c oxidase (complex IV, CIV), that cooperate to transfer electrons derived from NADH and succinate to molecular oxygen, creating an electrochemical gradient over the inner membrane that drives transmembrane transport and the ATP synthase. Cytochrome c oxidase is the component of the respiratory chain that catalyzes the reduction of oxygen to water. Electrons originating from reduced cytochrome c in the intermembrane space (IMS) are transferred via the dinuclear copper A center (CU(A)) of subunit 2 and heme A of subunit 1 to the active site in subunit 1, a binuclear center (BNC) formed by heme A3 and copper B (CU(B)). The BNC reduces molecular oxygen to 2 water molecules using 4 electrons from cytochrome c in the IMS and 4 protons from the mitochondrial matrix. The sequence is that of Cytochrome c oxidase subunit 3 (COIII) from Mytilus edulis (Blue mussel).